The primary structure comprises 198 residues: Glycerol-3-phosphate acyltransferase (198 aa).

The next 5 membrane-spanning stretches (helical) occupy residues 5–25 (LILL…LWIG), 56–76 (SIVT…PFFF), 84–104 (FWLL…FAGF), 114–134 (AGVI…IFLL), and 158–178 (LFMG…FVVW).

Belongs to the PlsY family. In terms of assembly, probably interacts with PlsX.

The protein localises to the cell membrane. It carries out the reaction an acyl phosphate + sn-glycerol 3-phosphate = a 1-acyl-sn-glycero-3-phosphate + phosphate. It participates in lipid metabolism; phospholipid metabolism. Catalyzes the transfer of an acyl group from acyl-phosphate (acyl-PO(4)) to glycerol-3-phosphate (G3P) to form lysophosphatidic acid (LPA). This enzyme utilizes acyl-phosphate as fatty acyl donor, but not acyl-CoA or acyl-ACP. This Listeria welshimeri serovar 6b (strain ATCC 35897 / DSM 20650 / CCUG 15529 / CIP 8149 / NCTC 11857 / SLCC 5334 / V8) protein is Glycerol-3-phosphate acyltransferase.